We begin with the raw amino-acid sequence, 342 residues long: N-acetyl-gamma-glutamyl-phosphate reductase (342 aa).

Residue cysteine 146 is part of the active site.

This sequence belongs to the NAGSA dehydrogenase family. Type 1 subfamily.

The protein resides in the cytoplasm. It carries out the reaction N-acetyl-L-glutamate 5-semialdehyde + phosphate + NADP(+) = N-acetyl-L-glutamyl 5-phosphate + NADPH + H(+). It functions in the pathway amino-acid biosynthesis; L-arginine biosynthesis; N(2)-acetyl-L-ornithine from L-glutamate: step 3/4. Catalyzes the NADPH-dependent reduction of N-acetyl-5-glutamyl phosphate to yield N-acetyl-L-glutamate 5-semialdehyde. The protein is N-acetyl-gamma-glutamyl-phosphate reductase of Frankia casuarinae (strain DSM 45818 / CECT 9043 / HFP020203 / CcI3).